A 466-amino-acid polypeptide reads, in one-letter code: Phytase A (466 aa).

The signal sequence occupies residues 1 to 19; the sequence is MGVFVVLLSIATLFGSTSG. Asparagine 27 carries N-linked (GlcNAc...) asparagine glycosylation. Cysteine 31 and cysteine 40 are disulfide-bonded. Residues tyrosine 51, arginine 81, histidine 82, arginine 85, and threonine 88 each contribute to the 1D-myo-inositol hexakisphosphate site. 4 cysteine pairs are disulfide-bonded: cysteine 71–cysteine 414, cysteine 215–cysteine 465, cysteine 264–cysteine 282, and cysteine 436–cysteine 444. The Nucleophile role is filled by histidine 82. 2 N-linked (GlcNAc...) asparagine glycosylation sites follow: asparagine 105 and asparagine 120. A 1D-myo-inositol hexakisphosphate-binding site is contributed by arginine 165. Residues asparagine 207 and asparagine 230 are each glycosylated (N-linked (GlcNAc...) asparagine). Lysine 301 serves as a coordination point for 1D-myo-inositol hexakisphosphate. N-linked (GlcNAc...) asparagine glycosylation is found at asparagine 339 and asparagine 352. 2 residues coordinate 1D-myo-inositol hexakisphosphate: histidine 361 and aspartate 362. Residue asparagine 376 is glycosylated (N-linked (GlcNAc...) asparagine).

The protein belongs to the histidine acid phosphatase family. Monomer.

The protein resides in the secreted. The enzyme catalyses 1D-myo-inositol hexakisphosphate + H2O = 1D-myo-inositol 1,2,4,5,6-pentakisphosphate + phosphate. The catalysed reaction is 1D-myo-inositol 1,2,4,5,6-pentakisphosphate + H2O = 1D-myo-inositol 1,2,5,6-tetrakisphosphate + phosphate. It catalyses the reaction 1D-myo-inositol 1,2,5,6-tetrakisphosphate + H2O = 1D-myo-inositol 1,2,6-trisphosphate + phosphate. It carries out the reaction 1D-myo-inositol 1,2,6-trisphosphate + H2O = 1D-myo-inositol 1,2-bisphosphate + phosphate. The enzyme catalyses 1D-myo-inositol 1,2-bisphosphate + H2O = 1D-myo-inositol 2-phosphate + phosphate. Functionally, catalyzes the phosphate monoester hydrolysis of phytic acid (myo-inositol hexakisphosphate), which results in the stepwise formation of myo-inositol pentakis-, tetrakis-, tris-, bis-, and monophosphates, as well as the liberation of inorganic phosphate. Myo-inositol 2-monophosphate is the end product. Has a broad substrate specificity and is also able to dephosphorylate other classic acid phosphatase substrates such as p-nitrophenyl phosphate, phenyl phosphate, fructose 1,6-bisphosphate, glucose 6-phosphate, 3-phosphoglycerate, as well as ADP and ATP. This Aspergillus terreus protein is Phytase A.